The sequence spans 344 residues: L-rhamnose-proton symporter (344 aa).

Helical transmembrane passes span 4–24 (AITM…CFYA), 38–58 (WSVG…ALLL), 68–88 (FNLS…IGNI), 101–121 (MGIG…TPII), 137–157 (TLLG…AGQL), 175–195 (LLLA…MNAA), 214–234 (LPSY…FCFI), 259–279 (ILLS…YAWG), 290–310 (MSWM…GLVL), and 321–341 (VAVL…VGLG).

This sequence belongs to the L-rhamnose transporter (TC 2.A.7.6) family.

It is found in the cell inner membrane. The catalysed reaction is L-rhamnopyranose(in) + H(+)(in) = L-rhamnopyranose(out) + H(+)(out). Functionally, uptake of L-rhamnose across the cytoplasmic membrane with the concomitant transport of protons into the cell (symport system). This chain is L-rhamnose-proton symporter, found in Salmonella dublin (strain CT_02021853).